The sequence spans 308 residues: Mitochondrial import receptor subunit TOM40B (308 aa).

Residues methionine 1–serine 29 are disordered. A required for mitochondrial targeting region spans residues proline 281–glycine 308.

It belongs to the Tom40 family. Forms part of the preprotein translocase of the outer mitochondrial membrane (TOM complex) containing TOMM22, TOMM40, TOMM40L and TOMM70. Interacts with mitochondrial targeting sequences.

The protein localises to the mitochondrion outer membrane. Functionally, potential channel-forming protein implicated in import of protein precursors into mitochondria. The sequence is that of Mitochondrial import receptor subunit TOM40B (TOMM40L) from Homo sapiens (Human).